The primary structure comprises 247 residues: Ribonuclease PH (247 aa).

Phosphate-binding positions include arginine 87 and 125–127 (GTR).

The protein belongs to the RNase PH family. In terms of assembly, homohexameric ring arranged as a trimer of dimers.

It catalyses the reaction tRNA(n+1) + phosphate = tRNA(n) + a ribonucleoside 5'-diphosphate. Its function is as follows. Phosphorolytic 3'-5' exoribonuclease that plays an important role in tRNA 3'-end maturation. Removes nucleotide residues following the 3'-CCA terminus of tRNAs; can also add nucleotides to the ends of RNA molecules by using nucleoside diphosphates as substrates, but this may not be physiologically important. Probably plays a role in initiation of 16S rRNA degradation (leading to ribosome degradation) during starvation. This chain is Ribonuclease PH, found in Nostoc sp. (strain PCC 7120 / SAG 25.82 / UTEX 2576).